The following is a 224-amino-acid chain: Deoxyribose-phosphate aldolase (224 aa).

The active-site Proton donor/acceptor is the aspartate 92. The active-site Schiff-base intermediate with acetaldehyde is the lysine 154. The active-site Proton donor/acceptor is the lysine 183.

It belongs to the DeoC/FbaB aldolase family. DeoC type 1 subfamily.

The protein resides in the cytoplasm. It carries out the reaction 2-deoxy-D-ribose 5-phosphate = D-glyceraldehyde 3-phosphate + acetaldehyde. Its pathway is carbohydrate degradation; 2-deoxy-D-ribose 1-phosphate degradation; D-glyceraldehyde 3-phosphate and acetaldehyde from 2-deoxy-alpha-D-ribose 1-phosphate: step 2/2. In terms of biological role, catalyzes a reversible aldol reaction between acetaldehyde and D-glyceraldehyde 3-phosphate to generate 2-deoxy-D-ribose 5-phosphate. The chain is Deoxyribose-phosphate aldolase from Mannheimia succiniciproducens (strain KCTC 0769BP / MBEL55E).